The chain runs to 391 residues: L-tryptophan--pyruvate aminotransferase 1 (391 aa).

Pyridoxal 5'-phosphate contacts are provided by residues Tyr-58, 100-101, Asn-168, 191-194, 214-217, and Arg-225; these read ST, DFAY, and TFSK. Residue Lys-217 is modified to N6-(pyridoxal phosphate)lysine.

The protein belongs to the alliinase family. Pyridoxal 5'-phosphate serves as cofactor. In terms of tissue distribution, expressed at the leaf margin and in the vasculature of emerging young leaves. Expressed in the quiescent center and in the vasculature of root tips. Detected in the shoot apical meristem, stems, sepals, stamen filaments, the shoot and root junction, the stigma and the base of the silique.

It localises to the cytoplasm. The catalysed reaction is L-tryptophan + 2-oxoglutarate = indole-3-pyruvate + L-glutamate. It carries out the reaction L-tryptophan + pyruvate = indole-3-pyruvate + L-alanine. It participates in plant hormone metabolism; auxin biosynthesis. Inhibited by L-kynurenine. L-tryptophan aminotransferase involved in auxin (IAA) biosynthesis. Can convert L-tryptophan and pyruvate to indole-3-pyruvic acid (IPA) and alanine. Catalyzes the first step in IPA branch of the auxin biosynthetic pathway. Required for auxin production to initiate multiple change in growth in response to environmental and developmental cues. It is also active with phenylalanine, tyrosine, leucine, alanine, methionine and glutamine. Both TAA1 and TAR2 are required for maintaining proper auxin levels in roots, while TAA1, TAR1 and TAR2 are required for proper embryo patterning. Involved in the maintenance of the root stem cell niches and required for shade avoidance. The protein is L-tryptophan--pyruvate aminotransferase 1 (TAA1) of Arabidopsis thaliana (Mouse-ear cress).